The sequence spans 361 residues: Peptide chain release factor 1 (361 aa).

Gln237 carries the post-translational modification N5-methylglutamine.

The protein belongs to the prokaryotic/mitochondrial release factor family. In terms of processing, methylated by PrmC. Methylation increases the termination efficiency of RF1.

The protein resides in the cytoplasm. In terms of biological role, peptide chain release factor 1 directs the termination of translation in response to the peptide chain termination codons UAG and UAA. The sequence is that of Peptide chain release factor 1 from Thioalkalivibrio sulfidiphilus (strain HL-EbGR7).